Consider the following 769-residue polypeptide: Glutathione biosynthesis bifunctional protein GshAB (769 aa).

The interval 1–347 (MLDSFKEDPN…QLADENENNI (347 aa)) is glutamate--cysteine ligase. The region spanning 514-768 (KLVLAEHDIR…IGDKILDFLF (255 aa)) is the ATP-grasp domain. Residue 541–599 (SLFEDKQIVVKPKSTNYGWGISIFKNKFTLEDYQEALNIAFSYDSSVIIEEFIPGDEFR) coordinates ATP. Positions 721, 738, and 740 each coordinate Mg(2+). Mn(2+)-binding residues include Asp-721, Glu-738, and Asn-740.

This sequence in the N-terminal section; belongs to the glutamate--cysteine ligase type 1 family. Type 2 subfamily. As to quaternary structure, monomer. Mg(2+) serves as cofactor. Requires Mn(2+) as cofactor.

It catalyses the reaction L-cysteine + L-glutamate + ATP = gamma-L-glutamyl-L-cysteine + ADP + phosphate + H(+). The catalysed reaction is gamma-L-glutamyl-L-cysteine + glycine + ATP = glutathione + ADP + phosphate + H(+). The protein operates within sulfur metabolism; glutathione biosynthesis; glutathione from L-cysteine and L-glutamate: step 1/2. Its pathway is sulfur metabolism; glutathione biosynthesis; glutathione from L-cysteine and L-glutamate: step 2/2. Functionally, synthesizes glutathione from L-glutamate and L-cysteine via gamma-L-glutamyl-L-cysteine. The sequence is that of Glutathione biosynthesis bifunctional protein GshAB from Listeria monocytogenes serovar 1/2a (strain ATCC BAA-679 / EGD-e).